Consider the following 139-residue polypeptide: D-ribose pyranase (139 aa).

His-20 functions as the Proton donor in the catalytic mechanism. Residues Asp-28, His-106, and 128-130 (YAN) each bind substrate.

This sequence belongs to the RbsD / FucU family. RbsD subfamily. In terms of assembly, homodecamer.

Its subcellular location is the cytoplasm. The catalysed reaction is beta-D-ribopyranose = beta-D-ribofuranose. The protein operates within carbohydrate metabolism; D-ribose degradation; D-ribose 5-phosphate from beta-D-ribopyranose: step 1/2. Its function is as follows. Catalyzes the interconversion of beta-pyran and beta-furan forms of D-ribose. The protein is D-ribose pyranase of Salmonella choleraesuis (strain SC-B67).